A 771-amino-acid polypeptide reads, in one-letter code: Dol-P-Glc:Glc(2)Man(9)GlcNAc(2)-PP-Dol alpha-1,2-glucosyltransferase (771 aa).

7 helical membrane passes run 45–65 (FITA…LALV), 160–180 (VSFY…IFFF), 182–202 (GLYY…WNHL), 221–241 (VVLG…VVVY), 293–313 (VDMA…IAAL), 326–346 (HITI…VVLG), and 357–377 (LPQM…LLIP). A disordered region spans residues 392–449 (TPTPSHTTTKDPGRSSWRFTKPSITSKKSSTTKPPQRSGPTPASSSSSSSSFSPDTNS). Composition is skewed to low complexity over residues 411-426 (TKPS…TKPP) and 435-449 (SSSS…DTNS). Asn-448 is a glycosylation site (N-linked (GlcNAc...) asparagine). Transmembrane regions (helical) follow at residues 469 to 489 (PFYL…NTII) and 503 to 525 (YIFR…AYTL). The span at 584 to 593 (QKNIKDKQKE) shows a compositional bias: basic and acidic residues. A disordered region spans residues 584 to 605 (QKNIKDKQKEVEEEEEEEEKED). Acidic residues predominate over residues 594–604 (VEEEEEEEEKE). 2 helical membrane passes run 631–651 (TSTV…APLV) and 656–676 (FILP…SSSL). Positions 682–708 (SSSFASSTTESGNGDGNDAATAARQQQ) are disordered. The chain crosses the membrane as a helical span at residues 728 to 748 (LALETVWFLAINIGTMYMFLF).

The protein belongs to the ALG10 glucosyltransferase family.

Its subcellular location is the endoplasmic reticulum membrane. The enzyme catalyses an alpha-D-Glc-(1-&gt;3)-alpha-D-Glc-(1-&gt;3)-alpha-D-Man-(1-&gt;2)-alpha-D-Man-(1-&gt;2)-alpha-D-Man-(1-&gt;3)-[alpha-D-Man-(1-&gt;2)-alpha-D-Man-(1-&gt;3)-[alpha-D-Man-(1-&gt;2)-alpha-D-Man-(1-&gt;6)]-alpha-D-Man-(1-&gt;6)]-beta-D-Man-(1-&gt;4)-beta-D-GlcNAc-(1-&gt;4)-alpha-D-GlcNAc-diphospho-di-trans,poly-cis-dolichol + a di-trans,poly-cis-dolichyl beta-D-glucosyl phosphate = a alpha-D-Glc-(1-&gt;2)-alpha-D-Glc-(1-&gt;3)-alpha-D-Glc-(1-&gt;3)-alpha-D-Man-(1-&gt;2)-alpha-D-Man-(1-&gt;2)-alpha-D-Man-(1-&gt;3)-[alpha-D-Man-(1-&gt;2)-alpha-D-Man-(1-&gt;3)-[alpha-D-Man-(1-&gt;2)-alpha-D-Man-(1-&gt;6)]-alpha-D-Man-(1-&gt;6)]-beta-D-Man-(1-&gt;4)-beta-D-GlcNAc-(1-&gt;4)-alpha-D-GlcNAc-diphospho-di-trans,poly-cis-dolichol + a di-trans,poly-cis-dolichyl phosphate + H(+). Its pathway is protein modification; protein glycosylation. Dol-P-Glc:Glc(2)Man(9)GlcNAc(2)-PP-Dol alpha-1,2-glucosyltransferase that operates in the biosynthetic pathway of dolichol-linked oligosaccharides, the glycan precursors employed in protein asparagine (N)-glycosylation. The assembly of dolichol-linked oligosaccharides begins on the cytosolic side of the endoplasmic reticulum membrane and finishes in its lumen. The sequential addition of sugars to dolichol pyrophosphate produces dolichol-linked oligosaccharides containing fourteen sugars, including two GlcNAcs, nine mannoses and three glucoses. Once assembled, the oligosaccharide is transferred from the lipid to nascent proteins by oligosaccharyltransferases. In the lumen of the endoplasmic reticulum, adds the third and last glucose residue from dolichyl phosphate glucose (Dol-P-Glc) onto the lipid-linked oligosaccharide intermediate Glc(2)Man(9)GlcNAc(2)-PP-Dol to produce Glc(3)Man(9)GlcNAc(2)-PP-Dol. The sequence is that of Dol-P-Glc:Glc(2)Man(9)GlcNAc(2)-PP-Dol alpha-1,2-glucosyltransferase (alg-10) from Neurospora crassa (strain ATCC 24698 / 74-OR23-1A / CBS 708.71 / DSM 1257 / FGSC 987).